The sequence spans 237 residues: Ribonuclease 3 (237 aa).

Positions Leu-4 to Gly-133 constitute an RNase III domain. Glu-46 is a binding site for Mg(2+). Residues Asp-50 and Glu-122 contribute to the active site. A Mg(2+)-binding site is contributed by Glu-122. The 70-residue stretch at Asp-160–Asn-229 folds into the DRBM domain.

Belongs to the ribonuclease III family. As to quaternary structure, homodimer. Mg(2+) serves as cofactor.

The protein localises to the cytoplasm. The catalysed reaction is Endonucleolytic cleavage to 5'-phosphomonoester.. Digests double-stranded RNA. Involved in the processing of primary rRNA transcript to yield the immediate precursors to the large and small rRNAs (23S and 16S). Processes some mRNAs, and tRNAs when they are encoded in the rRNA operon. Processes pre-crRNA and tracrRNA of type II CRISPR loci if present in the organism. This Dehalococcoides mccartyi (strain CBDB1) protein is Ribonuclease 3.